Consider the following 179-residue polypeptide: Bifunctional protein PyrR (179 aa).

The short motif at 100–112 (VILVDDVLFTGRT) is the PRPP-binding element.

This sequence belongs to the purine/pyrimidine phosphoribosyltransferase family. PyrR subfamily. In terms of assembly, homodimer and homohexamer; in equilibrium.

It catalyses the reaction UMP + diphosphate = 5-phospho-alpha-D-ribose 1-diphosphate + uracil. Regulates transcriptional attenuation of the pyrimidine nucleotide (pyr) operon by binding in a uridine-dependent manner to specific sites on pyr mRNA. This disrupts an antiterminator hairpin in the RNA and favors formation of a downstream transcription terminator, leading to a reduced expression of downstream genes. Its function is as follows. Also displays a weak uracil phosphoribosyltransferase activity which is not physiologically significant. The protein is Bifunctional protein PyrR of Geobacillus sp. (strain WCH70).